Here is a 210-residue protein sequence, read N- to C-terminus: Large ribosomal subunit protein uL3 (210 aa).

Residues 120–143 are disordered; that stretch reads FQGNIKKDGQSRGPMGHGSRYHRR.

This sequence belongs to the universal ribosomal protein uL3 family. Part of the 50S ribosomal subunit. Forms a cluster with proteins L14 and L19.

One of the primary rRNA binding proteins, it binds directly near the 3'-end of the 23S rRNA, where it nucleates assembly of the 50S subunit. The polypeptide is Large ribosomal subunit protein uL3 (Latilactobacillus sakei subsp. sakei (strain 23K) (Lactobacillus sakei subsp. sakei)).